Consider the following 337-residue polypeptide: Probable sulfurtransferase (337 aa).

Residue Gly83 participates in ATP binding. Positions 172 and 175 each coordinate [4Fe-4S] cluster. Residues Lys179 and Gly206 each contribute to the ATP site. Cys284 serves as a coordination point for [4Fe-4S] cluster.

Belongs to the TtcA family. [4Fe-4S] cluster is required as a cofactor. Requires Mg(2+) as cofactor.

This Methanocaldococcus jannaschii (strain ATCC 43067 / DSM 2661 / JAL-1 / JCM 10045 / NBRC 100440) (Methanococcus jannaschii) protein is Probable sulfurtransferase.